A 180-amino-acid polypeptide reads, in one-letter code: Large ribosomal subunit protein uL6 (180 aa).

This sequence belongs to the universal ribosomal protein uL6 family. Part of the 50S ribosomal subunit.

Its function is as follows. This protein binds to the 23S rRNA, and is important in its secondary structure. It is located near the subunit interface in the base of the L7/L12 stalk, and near the tRNA binding site of the peptidyltransferase center. The sequence is that of Large ribosomal subunit protein uL6 from Dictyoglomus turgidum (strain DSM 6724 / Z-1310).